A 410-amino-acid polypeptide reads, in one-letter code: Voltage-dependent chloride channel 2, chloroplastic (410 aa).

At 1 to 110 (MYQSMNLSFS…RHVSSSPSSR (110 aa)) the chain is on the lumenal, thylakoid side. Residues 111 to 131 (VILSLIPPVFFFTTVAILIAG) traverse the membrane as a helical segment. Over 132-147 (YNSAVDLDWLPDFFPV) the chain is Stromal. Residues 148–168 (LRASPLPYQLTAPALALLLVF) traverse the membrane as a helical segment. Topologically, residues 169–315 (RTEASYSRFE…PLSYTRLTSR (147 aa)) are lumenal, thylakoid. 2 consecutive transmembrane segments (helical) span residues 316 to 336 (FLVL…HWNV) and 337 to 357 (VPAT…GVLI). Residues 358–410 (EEPFSMLALDELCAMVLSNSDEAVESKEVIRNRIIAKKRILEIKHSSNGWHKS) lie on the Lumenal, thylakoid side of the membrane.

Belongs to the anion channel-forming bestrophin (TC 1.A.46) family. Voltage-dependent chloride channel subfamily. In terms of tissue distribution, mostly expressed in flowers and, to a lower extent, in leaves, stems and roots.

It is found in the plastid. The protein resides in the chloroplast thylakoid membrane. It catalyses the reaction chloride(in) = chloride(out). In terms of biological role, voltage-dependent chloride (Cl) channel probably contributing to proton motive force (PMF) partitioning across the thylakoid membrane by anion influx into the lumen. Influences thylakoid ultrastructure, including lumen size and organization. In Arabidopsis thaliana (Mouse-ear cress), this protein is Voltage-dependent chloride channel 2, chloroplastic.